Consider the following 59-residue polypeptide: Photosystem II reaction center protein K (59 aa).

A propeptide spanning residues 1 to 22 is cleaved from the precursor; sequence MLNIFSLICLNSALHSSSFFFA. A helical membrane pass occupies residues 38 to 58; sequence MPVIPVLFFLLALVWQAAVSF.

This sequence belongs to the PsbK family. PSII is composed of 1 copy each of membrane proteins PsbA, PsbB, PsbC, PsbD, PsbE, PsbF, PsbH, PsbI, PsbJ, PsbK, PsbL, PsbM, PsbT, PsbX, PsbY, PsbZ, Psb30/Ycf12, at least 3 peripheral proteins of the oxygen-evolving complex and a large number of cofactors. It forms dimeric complexes.

It is found in the plastid. Its subcellular location is the chloroplast thylakoid membrane. In terms of biological role, one of the components of the core complex of photosystem II (PSII). PSII is a light-driven water:plastoquinone oxidoreductase that uses light energy to abstract electrons from H(2)O, generating O(2) and a proton gradient subsequently used for ATP formation. It consists of a core antenna complex that captures photons, and an electron transfer chain that converts photonic excitation into a charge separation. In Calycanthus floridus var. glaucus (Eastern sweetshrub), this protein is Photosystem II reaction center protein K.